A 303-amino-acid polypeptide reads, in one-letter code: Coenzyme PQQ synthesis protein B (303 aa).

Belongs to the PqqB family.

It participates in cofactor biosynthesis; pyrroloquinoline quinone biosynthesis. May be involved in the transport of PQQ or its precursor to the periplasm. The chain is Coenzyme PQQ synthesis protein B from Pseudomonas putida (strain ATCC 47054 / DSM 6125 / CFBP 8728 / NCIMB 11950 / KT2440).